A 90-amino-acid chain; its full sequence is MASKKAGGSTRNGRDSEAKRLGVKAYGNELIPAGSIIVRQRGTKFHAGDNVGMGKDHTLFAKIDGYVEFKTKGALNRKTVSIRPYTGSEE.

The tract at residues 1–21 (MASKKAGGSTRNGRDSEAKRL) is disordered.

The protein belongs to the bacterial ribosomal protein bL27 family.

In Neisseria gonorrhoeae (strain ATCC 700825 / FA 1090), this protein is Large ribosomal subunit protein bL27.